We begin with the raw amino-acid sequence, 172 residues long: dCTP pyrophosphatase (172 aa).

The catalysed reaction is dCTP + H2O = dCMP + diphosphate + H(+). The chain is dCTP pyrophosphatase (56) from Enterobacteria phage LZ5 (Bacteriophage LZ5).